The chain runs to 244 residues: Carboxy-S-adenosyl-L-methionine synthase (244 aa).

Residues Tyr40, Gly65–Ser67, Asp90–Asn91, Asn134, and Arg201 each bind S-adenosyl-L-methionine.

The protein belongs to the class I-like SAM-binding methyltransferase superfamily. Cx-SAM synthase family. In terms of assembly, homodimer.

The catalysed reaction is prephenate + S-adenosyl-L-methionine = carboxy-S-adenosyl-L-methionine + 3-phenylpyruvate + H2O. In terms of biological role, catalyzes the conversion of S-adenosyl-L-methionine (SAM) to carboxy-S-adenosyl-L-methionine (Cx-SAM). This Citrifermentans bemidjiense (strain ATCC BAA-1014 / DSM 16622 / JCM 12645 / Bem) (Geobacter bemidjiensis) protein is Carboxy-S-adenosyl-L-methionine synthase.